Consider the following 213-residue polypeptide: Macrodontain-1 (213 aa).

3 disulfides stabilise this stretch: Cys-23/Cys-63, Cys-57/Cys-96, and Cys-153/Cys-201. Cys-26 is an active-site residue. Active-site residues include His-159 and Asn-176.

Monomer. In terms of tissue distribution, fruits.

Inhibited by the general cysteine protease inhibitor E64 (L-trans-epoxysuccinyl-leucylamide-(4-guanido)-butane). Cysteine protease that catalyzes the preferential cleavage: Ala-|-Xaa &gt; Gln-|-Xaa &gt; Tyr-Xaa &gt;&gt; Leu-|-Xaa &gt; Gly-|-Xaa. Hydrolyzes the synthetic peptide substrate Bz-Phe-Val-Arg-pNA. This is Macrodontain-1 from Ananas macrodontes (False pineapple).